The chain runs to 128 residues: Small ribosomal subunit protein uS11 (128 aa).

The protein belongs to the universal ribosomal protein uS11 family. As to quaternary structure, part of the 30S ribosomal subunit. Interacts with proteins S7 and S18. Binds to IF-3.

Located on the platform of the 30S subunit, it bridges several disparate RNA helices of the 16S rRNA. Forms part of the Shine-Dalgarno cleft in the 70S ribosome. The chain is Small ribosomal subunit protein uS11 from Leuconostoc mesenteroides subsp. mesenteroides (strain ATCC 8293 / DSM 20343 / BCRC 11652 / CCM 1803 / JCM 6124 / NCDO 523 / NBRC 100496 / NCIMB 8023 / NCTC 12954 / NRRL B-1118 / 37Y).